A 606-amino-acid polypeptide reads, in one-letter code: Melanoma-associated antigen D2 (606 aa).

2 disordered regions span residues 1-29 (MSDTSESGAGLTRFQAEASEKDSSSMMQT) and 52-204 (SEDV…GGRR). An N-acetylserine modification is found at Ser2. Ser5 bears the Phosphoserine mark. Residue Thr72 is modified to Phosphothreonine. Residues 79–100 (PATQASSTTQLTDTQVLATENK) are compositionally biased toward polar residues. The span at 122–131 (ETKKVSHVAD) shows a compositional bias: basic and acidic residues. Residues 142-164 (EAAPSQASADEPEPESAAAQSQE) are compositionally biased toward low complexity. Ser157 carries the post-translational modification Phosphoserine. Residues 171-181 (KVKAKKARKVK) are compositionally biased toward basic residues. Phosphoserine occurs at positions 190, 191, 194, 197, 244, and 247. Residues 248–260 (PKARRGKARRRAA) show a composition bias toward basic residues. A disordered region spans residues 248–275 (PKARRGKARRRAAKLQSSQEPEAPPPRD). Residues Ser264 and Ser265 each carry the phosphoserine modification. In terms of domain architecture, MAGE spans 279–478 (LQGRANDLVK…KEWAAQYREA (200 aa)). Positions 534–563 (GAEAKAKAQESGSASTGASTSTNNSASASA) are disordered.

Interacts with GNAS.

Regulates the expression, localization to the plasma membrane and function of the sodium chloride cotransporters SLC12A1 and SLC12A3, two key components of salt reabsorption in the distal renal tubule. The polypeptide is Melanoma-associated antigen D2 (MAGED2) (Pongo abelii (Sumatran orangutan)).